A 315-amino-acid chain; its full sequence is MQGLNHTSVSEFILVGFSAFPHLQLMLFLLFLLMYLFTLLGNLLIMATVWSERSLHMPMYLFLCALSITEILYTVAIIPRMLADLLSTQRSIAFLACASQMFFSFSFGFTHSFLLTVMGYDRYVAICHPLRYNVLMSLRGCTCRVGCSWAGGLVMGMVVTSAIFHLAFCGHKEIHHFFCHVPPLLKLACGDDVLVVAKGVGLVCITALLGCFLLILLSYAFIVAAILKIPSAEGRNKAFSTCASHLTVVVVHYGFASVIYLKPKGPQSPEGDTLMGITYTVLTPFLSPIIFSLRNKELKVAMKKTCFTKLFPQNC.

The Extracellular segment spans residues 1–25 (MQGLNHTSVSEFILVGFSAFPHLQL). Asparagine 5 carries an N-linked (GlcNAc...) asparagine glycan. The chain crosses the membrane as a helical span at residues 26–46 (MLFLLFLLMYLFTLLGNLLIM). Topologically, residues 47 to 54 (ATVWSERS) are cytoplasmic. A helical transmembrane segment spans residues 55–75 (LHMPMYLFLCALSITEILYTV). At 76-99 (AIIPRMLADLLSTQRSIAFLACAS) the chain is on the extracellular side. An intrachain disulfide couples cysteine 97 to cysteine 189. Residues 100–120 (QMFFSFSFGFTHSFLLTVMGY) traverse the membrane as a helical segment. The Cytoplasmic segment spans residues 121 to 139 (DRYVAICHPLRYNVLMSLR). A helical membrane pass occupies residues 140–160 (GCTCRVGCSWAGGLVMGMVVT). At 161-197 (SAIFHLAFCGHKEIHHFFCHVPPLLKLACGDDVLVVA) the chain is on the extracellular side. Residues 198–218 (KGVGLVCITALLGCFLLILLS) traverse the membrane as a helical segment. The Cytoplasmic portion of the chain corresponds to 219-238 (YAFIVAAILKIPSAEGRNKA). Residues 239–259 (FSTCASHLTVVVVHYGFASVI) traverse the membrane as a helical segment. The Extracellular segment spans residues 260–272 (YLKPKGPQSPEGD). A helical membrane pass occupies residues 273-293 (TLMGITYTVLTPFLSPIIFSL). Residues 294–315 (RNKELKVAMKKTCFTKLFPQNC) are Cytoplasmic-facing.

Belongs to the G-protein coupled receptor 1 family.

It is found in the cell membrane. Its function is as follows. Odorant receptor. The chain is Olfactory receptor 10H5 (OR10H5) from Homo sapiens (Human).